The following is a 116-amino-acid chain: Transcription initiation factor IIA subunit 2 (116 aa).

Belongs to the TFIIA subunit 2 family. In terms of assembly, TFIIA is a heterodimer composed of the large TOA1 and the small TOA2 subunits.

Its subcellular location is the nucleus. Its function is as follows. TFIIA is a component of the transcription machinery of RNA polymerase II and plays an important role in transcriptional activation. TFIIA in a complex with tbp mediates transcriptional activity. This is Transcription initiation factor IIA subunit 2 (TOA2) from Pyricularia oryzae (strain 70-15 / ATCC MYA-4617 / FGSC 8958) (Rice blast fungus).